A 64-amino-acid chain; its full sequence is Large ribosomal subunit protein bL32 (64 aa).

The disordered stretch occupies residues methionine 1–valine 36.

It belongs to the bacterial ribosomal protein bL32 family.

This chain is Large ribosomal subunit protein bL32, found in Stenotrophomonas maltophilia (strain K279a).